The chain runs to 342 residues: tRNA dimethylallyltransferase (342 aa).

G39 to T46 contacts ATP. Residue T41 to T46 participates in substrate binding. An interaction with substrate tRNA region spans residues D64 to Q67.

The protein belongs to the IPP transferase family. Monomer. Mg(2+) is required as a cofactor.

The enzyme catalyses adenosine(37) in tRNA + dimethylallyl diphosphate = N(6)-dimethylallyladenosine(37) in tRNA + diphosphate. Functionally, catalyzes the transfer of a dimethylallyl group onto the adenine at position 37 in tRNAs that read codons beginning with uridine, leading to the formation of N6-(dimethylallyl)adenosine (i(6)A). This Chlamydia pneumoniae (Chlamydophila pneumoniae) protein is tRNA dimethylallyltransferase.